Here is a 201-residue protein sequence, read N- to C-terminus: Protein OPI10 homolog (201 aa).

It belongs to the OPI10 family.

This Anopheles gambiae (African malaria mosquito) protein is Protein OPI10 homolog.